Consider the following 146-residue polypeptide: D-aminoacyl-tRNA deacylase (146 aa).

Positions 137–138 match the Gly-cisPro motif, important for rejection of L-amino acids motif; the sequence is GP.

Belongs to the DTD family. Homodimer.

The protein resides in the cytoplasm. The catalysed reaction is glycyl-tRNA(Ala) + H2O = tRNA(Ala) + glycine + H(+). The enzyme catalyses a D-aminoacyl-tRNA + H2O = a tRNA + a D-alpha-amino acid + H(+). In terms of biological role, an aminoacyl-tRNA editing enzyme that deacylates mischarged D-aminoacyl-tRNAs. Also deacylates mischarged glycyl-tRNA(Ala), protecting cells against glycine mischarging by AlaRS. Acts via tRNA-based rather than protein-based catalysis; rejects L-amino acids rather than detecting D-amino acids in the active site. By recycling D-aminoacyl-tRNA to D-amino acids and free tRNA molecules, this enzyme counteracts the toxicity associated with the formation of D-aminoacyl-tRNA entities in vivo and helps enforce protein L-homochirality. This is D-aminoacyl-tRNA deacylase from Bacillus thuringiensis subsp. konkukian (strain 97-27).